The primary structure comprises 393 residues: HORMA domain-containing protein 1 (393 aa).

The region spanning 24–226 is the HORMA domain; that stretch reads QQSLVLVKRL…TPFHTFKVKV (203 aa). The interval 322–393 is disordered; sequence SKTSELDVSE…RKFSEPKERI (72 aa). Residues 352 to 361 are compositionally biased toward basic and acidic residues; sequence KSKENRKRTQ. Ser375 is modified (phosphoserine). The Nuclear localization signal motif lies at 382–385; it reads KRRK.

In terms of assembly, interacts with HORMAD2. Interacts with IHO1. Post-translationally, phosphorylated at Ser-376 in a SPO11-dependent manner.

The protein localises to the nucleus. Its subcellular location is the chromosome. In terms of biological role, plays a key role in meiotic progression. Regulates 3 different functions during meiosis: ensures that sufficient numbers of processed DNA double-strand breaks (DSBs) are available for successful homology search by increasing the steady-state numbers of single-stranded DSB ends. Promotes synaptonemal-complex formation independently of its role in homology search. Plays a key role in the male mid-pachytene checkpoint and the female meiotic prophase checkpoint: required for efficient build-up of ATR activity on unsynapsed chromosome regions, a process believed to form the basis of meiotic silencing of unsynapsed chromatin (MSUC) and meiotic prophase quality control in both sexes. The chain is HORMA domain-containing protein 1 (HORMAD1) from Bos taurus (Bovine).